The chain runs to 346 residues: Cyclin-dependent kinase 20 (346 aa).

Positions 4 to 288 constitute a Protein kinase domain; sequence YCILGRIGEG…ASQALLHQYF (285 aa). ATP is bound by residues 10-18 and Lys33; that span reads IGEGAHGIV. Residue Asp127 is the Proton acceptor of the active site. The tract at residues 298-324 is disordered; the sequence is SELPIPQRPGGPTPKAHPGPPHVHDFH. Residues 303-318 are compositionally biased toward pro residues; the sequence is PQRPGGPTPKAHPGPP.

It belongs to the protein kinase superfamily. CMGC Ser/Thr protein kinase family. CDC2/CDKX subfamily. Monomer. Interacts with TBC1D32 and MAK.

The protein localises to the nucleus. It localises to the cytoplasm. It is found in the cell projection. Its subcellular location is the cilium. It catalyses the reaction L-seryl-[protein] + ATP = O-phospho-L-seryl-[protein] + ADP + H(+). The catalysed reaction is L-threonyl-[protein] + ATP = O-phospho-L-threonyl-[protein] + ADP + H(+). In terms of biological role, required for high-level Shh responses in the developing neural tube. Together with TBC1D32, controls the structure of the primary cilium by coordinating assembly of the ciliary membrane and axoneme, allowing GLI2 to be properly activated in response to SHH signaling. Involved in cell growth. Activates CDK2, a kinase involved in the control of the cell cycle, by phosphorylating residue 'Thr-160'. In Rattus norvegicus (Rat), this protein is Cyclin-dependent kinase 20 (Cdk20).